The sequence spans 477 residues: POC1 centriolar protein homolog B (477 aa).

WD repeat units follow at residues 16–55 (GHKA…RAYR), 58–97 (GHKD…KSSE), 100–139 (AHTA…FLYS), 142–181 (RHTH…CVNN), 183–223 (SDSV…LLQH), 226–265 (VHSC…LIYT), and 268–307 (GHTG…VHYR). Positions 449–469 (EQRLSLTEDKLKDCLENQQKL) form a coiled coil.

This sequence belongs to the WD repeat POC1 family. As to quaternary structure, interacts with POC1A. Interacts with FAM161A. Interacts with CEP44; the interaction is direct and recruits POC1B to centriolar microtubules. Forms a microtubule-associated complex with POC5, CETN2 and FAM161A. Interacts with CCDC15. Post-translationally, phosphorylated in mitotic cells that may be mediated by CDK1.

The protein localises to the cytoplasm. It is found in the cytoskeleton. Its subcellular location is the microtubule organizing center. The protein resides in the centrosome. It localises to the centriole. The protein localises to the cilium basal body. It is found in the spindle pole. In terms of biological role, plays an important role in centriole assembly and/or stability and ciliogenesis. Involved in early steps of centriole duplication, as well as in the later steps of centriole length control. Acts in concert with POC1A to ensure centriole integrity and proper mitotic spindle formation. Required for primary cilia formation, ciliary length and also cell proliferation. Required for retinal integrity. Acts as a positive regulator of centriole elongation. This Rattus norvegicus (Rat) protein is POC1 centriolar protein homolog B (Poc1b).